The following is a 37-amino-acid chain: Brevinin-2DYe (37 aa).

The cysteines at positions 31 and 37 are disulfide-linked.

Expressed by the skin glands.

The protein localises to the secreted. Its function is as follows. Antimicrobial peptide. Active against the Gram-positive bacterium S.aureus (MIC=15 uM) and the Gram-negative bacterium E.coli (MIC=30 uM). The sequence is that of Brevinin-2DYe from Rana dybowskii (Dybovsky's frog).